Here is a 429-residue protein sequence, read N- to C-terminus: Adenylosuccinate synthetase (429 aa).

GTP-binding positions include 12–18 and 40–42; these read GDEGKGK and GHT. The active-site Proton acceptor is Asp-13. 2 residues coordinate Mg(2+): Asp-13 and Gly-40. IMP is bound by residues 13-16, 38-41, Thr-128, Arg-142, Gln-223, Thr-238, and Arg-302; these read DEGK and NAGH. His-41 acts as the Proton donor in catalysis. 298–304 contributes to the substrate binding site; sequence TVTKRPR. Residues Arg-304, 330-332, and 412-414 contribute to the GTP site; these read CLD and SVG.

This sequence belongs to the adenylosuccinate synthetase family. Homodimer. Mg(2+) is required as a cofactor.

The protein localises to the cytoplasm. The catalysed reaction is IMP + L-aspartate + GTP = N(6)-(1,2-dicarboxyethyl)-AMP + GDP + phosphate + 2 H(+). The protein operates within purine metabolism; AMP biosynthesis via de novo pathway; AMP from IMP: step 1/2. Plays an important role in the de novo pathway of purine nucleotide biosynthesis. Catalyzes the first committed step in the biosynthesis of AMP from IMP. This Lactiplantibacillus plantarum (strain ATCC BAA-793 / NCIMB 8826 / WCFS1) (Lactobacillus plantarum) protein is Adenylosuccinate synthetase.